The sequence spans 39 residues: Photosystem II reaction center protein J (39 aa).

A helical membrane pass occupies residues I7 to Y27.

Belongs to the PsbJ family. In terms of assembly, PSII is composed of 1 copy each of membrane proteins PsbA, PsbB, PsbC, PsbD, PsbE, PsbF, PsbH, PsbI, PsbJ, PsbK, PsbL, PsbM, PsbT, PsbX, PsbY, PsbZ, Psb30/Ycf12, at least 3 peripheral proteins of the oxygen-evolving complex and a large number of cofactors. It forms dimeric complexes.

Its subcellular location is the plastid. The protein localises to the chloroplast thylakoid membrane. In terms of biological role, one of the components of the core complex of photosystem II (PSII). PSII is a light-driven water:plastoquinone oxidoreductase that uses light energy to abstract electrons from H(2)O, generating O(2) and a proton gradient subsequently used for ATP formation. It consists of a core antenna complex that captures photons, and an electron transfer chain that converts photonic excitation into a charge separation. This Welwitschia mirabilis (Tree tumbo) protein is Photosystem II reaction center protein J.